Here is a 21-residue protein sequence, read N- to C-terminus: Short neurotoxin E1 (21 aa).

The disordered stretch occupies residues 1–21 (MICYNHQSSEPPTTXTCSEGQ).

Contains 4 disulfide bonds. In terms of tissue distribution, expressed by the venom gland.

Its subcellular location is the secreted. Binds to muscle nicotinic acetylcholine receptor (nAChR) and inhibit acetylcholine from binding to the receptor, thereby impairing neuromuscular transmission. The chain is Short neurotoxin E1 from Micrurus pyrrhocryptus (Coral snake).